We begin with the raw amino-acid sequence, 942 residues long: UvrABC system protein A (942 aa).

32–39 (GLSGSGKS) contributes to the ATP binding site. A C4-type zinc finger spans residues 251-278 (CPVCGFTVPELEPRLFSFNAPFGSCPTC). 2 ABC transporter domains span residues 308–589 (WNPI…KKSI) and 609–937 (GNGR…HYLK). Residue 641-648 (GVSGSGKS) participates in ATP binding. The C4-type zinc-finger motif lies at 740 to 766 (CEACSGDGIIKIEMHFLPDVYVPCEVC).

The protein belongs to the ABC transporter superfamily. UvrA family. In terms of assembly, forms a heterotetramer with UvrB during the search for lesions.

It is found in the cytoplasm. Functionally, the UvrABC repair system catalyzes the recognition and processing of DNA lesions. UvrA is an ATPase and a DNA-binding protein. A damage recognition complex composed of 2 UvrA and 2 UvrB subunits scans DNA for abnormalities. When the presence of a lesion has been verified by UvrB, the UvrA molecules dissociate. This Streptococcus pyogenes serotype M1 protein is UvrABC system protein A.